A 370-amino-acid chain; its full sequence is Phospho-N-acetylmuramoyl-pentapeptide-transferase (370 aa).

Helical transmembrane passes span 31–51 (LTSM…LYGL), 73–93 (TMGG…WGNL), 98–118 (IIVL…DDYM), 135–155 (LLSI…TGVI), 177–197 (GPVL…IIGS), 209–229 (GLAT…AYVS), 251–271 (VFLS…AHPA), 273–293 (VFMG…IVIL), 298–318 (ILLL…ILQV), and 347–367 (KIVI…LSTL).

The protein belongs to the glycosyltransferase 4 family. MraY subfamily. The cofactor is Mg(2+).

The protein localises to the cell inner membrane. The catalysed reaction is UDP-N-acetyl-alpha-D-muramoyl-L-alanyl-gamma-D-glutamyl-meso-2,6-diaminopimeloyl-D-alanyl-D-alanine + di-trans,octa-cis-undecaprenyl phosphate = di-trans,octa-cis-undecaprenyl diphospho-N-acetyl-alpha-D-muramoyl-L-alanyl-D-glutamyl-meso-2,6-diaminopimeloyl-D-alanyl-D-alanine + UMP. It functions in the pathway cell wall biogenesis; peptidoglycan biosynthesis. Catalyzes the initial step of the lipid cycle reactions in the biosynthesis of the cell wall peptidoglycan: transfers peptidoglycan precursor phospho-MurNAc-pentapeptide from UDP-MurNAc-pentapeptide onto the lipid carrier undecaprenyl phosphate, yielding undecaprenyl-pyrophosphoryl-MurNAc-pentapeptide, known as lipid I. The polypeptide is Phospho-N-acetylmuramoyl-pentapeptide-transferase (Leptospira borgpetersenii serovar Hardjo-bovis (strain JB197)).